Here is a 783-residue protein sequence, read N- to C-terminus: MTTNLYAIAGPSKPTTPTSTPSPRSEPPSPLKSLTSLPTNPLNSHGTSTPNTLTNQLSSTGIGISKPGLSVDENGEVMKVPAFLNKLYTMVSDPEVDDLIYWGESGDSFFVPNAELFGRELLPRWFKHSNFSSFVRQLNMYGFHKVPHLQSGALKNETPIELWEFANPYFKRGQPQLLTKVTRKNNRPSNSGVGPSSSVGGSGAGGGMSTRSASAAAASGSASGQIQQAISQGHEAGNHSTSGKYLITDGTTPGSVPPSHTSAGPLIAPQTLDLSAINSGIAAIRQTQASIATDLRKLQASNEALWRQAYETQEKQRKHEETIDLIVSFLERLFGTEGEGLKGLKEAMRRGVGVRRDRDGREGRDSRDSRFAEDDDGGQKKRRRVGIDRMIEGGTGDGTGEHGEIESPTSDDRLVEIGSNSEYSIPSVKRTSSSSHPISLGQLGSSRFTALPSEDPSPSASGPGSTSYEGLHTTQTNARGAGADVNVTDPTLGMNHLSPLSDTDPLLPSSSNALAPYSSHLPFPSSNSNQSNSFNPSNPSSAWASNPSQPLLSPTSAAAAAHAYNLDPSLLQTTIGSLLQSPAAAQMFLNSLSASAQGQALASHSHPHNPSPLNPNPNGNASTSASASAHGMNTGGMGTGSGTKDVDPTLALFSPLPSHSSLTSQSNDLLKSYSDALTVGEGVDNLQESIDSLVRSMGLDLPNGGSSVGVDVGDGAGVGTETGEGDGEFNVDEFLQGLAKEGEEEGEREVEGDGGVSSSGAGAGAENGRKEDVIAQSGLKSES.

Residues 1–59 (MTTNLYAIAGPSKPTTPTSTPSPRSEPPSPLKSLTSLPTNPLNSHGTSTPNTLTNQLSS) form a disordered region. 2 stretches are compositionally biased toward low complexity: residues 11-23 (PSKP…TPSP) and 31-42 (LKSLTSLPTNPL). Over residues 43 to 59 (NSHGTSTPNTLTNQLSS) the composition is skewed to polar residues. Residues 78–168 (MKVPAFLNKL…PIELWEFANP (91 aa)) mediate DNA binding. The tract at residues 181 to 262 (VTRKNNRPSN…PGSVPPSHTS (82 aa)) is disordered. Low complexity-rich tracts occupy residues 189-199 (SNSGVGPSSSV) and 209-233 (STRS…ISQG). Over residues 238–262 (NHSTSGKYLITDGTTPGSVPPSHTS) the composition is skewed to polar residues. The involved in trimerization stretch occupies residues 280-333 (GIAAIRQTQASIATDLRKLQASNEALWRQAYETQEKQRKHEETIDLIVSFLERL). Composition is skewed to basic and acidic residues over residues 350-372 (RGVG…SRFA) and 399-415 (TGEH…DRLV). 3 disordered regions span residues 350–554 (RGVG…LLSP), 599–652 (QALA…TLAL), and 736–783 (QGLA…KSES). The segment covering 418–448 (GSNSEYSIPSVKRTSSSSHPISLGQLGSSRF) has biased composition (polar residues). Low complexity-rich tracts occupy residues 452-467 (PSED…GSTS), 497-511 (LSPL…PSSS), 522-550 (PFPS…PSQP), and 616-632 (NPNG…AHGM). Positions 742-752 (GEEEGEREVEG) are enriched in acidic residues. Residues 753 to 765 (DGGVSSSGAGAGA) show a composition bias toward gly residues.

This sequence belongs to the HSF family. Homotrimer. Homotrimerization increases the affinity of HSF1 to DNA. Interacts with transcriptional coregulator SSA1 on chromatin.

It is found in the nucleus. Functionally, DNA-binding transcription factor that specifically binds heat shock promoter elements (HSE) and activates transcription. Together with its coregulator SSA1, activates expression of laccase LAC1 during glucose starvation. This is Heat shock transcription factor from Cryptococcus neoformans var. neoformans serotype D (strain JEC21 / ATCC MYA-565) (Filobasidiella neoformans).